An 875-amino-acid chain; its full sequence is Phosphoenolpyruvate carboxylase (875 aa).

Residues His137 and Lys542 contribute to the active site.

It belongs to the PEPCase type 1 family. Requires Mg(2+) as cofactor.

It catalyses the reaction oxaloacetate + phosphate = phosphoenolpyruvate + hydrogencarbonate. Functionally, forms oxaloacetate, a four-carbon dicarboxylic acid source for the tricarboxylic acid cycle. The protein is Phosphoenolpyruvate carboxylase of Pseudomonas putida (strain ATCC 700007 / DSM 6899 / JCM 31910 / BCRC 17059 / LMG 24140 / F1).